A 347-amino-acid chain; its full sequence is tRNA N6-adenosine threonylcarbamoyltransferase (347 aa).

Fe cation contacts are provided by histidine 109 and histidine 113. Substrate is bound by residues 136–140 (TVSGG), aspartate 169, glycine 182, aspartate 186, and asparagine 284. Aspartate 312 contacts Fe cation.

The protein belongs to the KAE1 / TsaD family. Requires Fe(2+) as cofactor.

It localises to the cytoplasm. The enzyme catalyses L-threonylcarbamoyladenylate + adenosine(37) in tRNA = N(6)-L-threonylcarbamoyladenosine(37) in tRNA + AMP + H(+). Its function is as follows. Required for the formation of a threonylcarbamoyl group on adenosine at position 37 (t(6)A37) in tRNAs that read codons beginning with adenine. Is involved in the transfer of the threonylcarbamoyl moiety of threonylcarbamoyl-AMP (TC-AMP) to the N6 group of A37, together with TsaE and TsaB. TsaD likely plays a direct catalytic role in this reaction. This chain is tRNA N6-adenosine threonylcarbamoyltransferase, found in Chlorobium phaeobacteroides (strain BS1).